The primary structure comprises 391 residues: Mycofactocin maturase MftC (391 aa).

The Radical SAM core domain occupies 16 to 232 (LDAPICLTWE…KGERVLTGDS (217 aa)). Cys-30, Cys-34, Cys-37, Cys-251, Cys-258, Cys-269, Cys-310, Cys-313, Cys-319, Cys-323, and Cys-341 together coordinate [4Fe-4S] cluster. Residues 340 to 391 (ECVQGHSEPALARERHLPRPRADHSRGRRVSKPVPLTLSMRPPKRPCNESPV) are disordered. Basic and acidic residues predominate over residues 350–364 (LARERHLPRPRADHS).

Belongs to the radical SAM superfamily. It depends on [4Fe-4S] cluster as a cofactor.

It catalyses the reaction [mycofactocin precursor peptide]-C-terminal glycyl-L-valyl-L-tyrosine + S-adenosyl-L-methionine = [mycofactocin precursor peptide]-C-terminal glycyl-N-{[2-(4-hydroxyphenyl)ethenyl]-3-methylbutanamide} + 5'-deoxyadenosine + L-methionine + CO2. It carries out the reaction [mycofactocin precursor peptide]-C-terminal glycyl-N-{[2-(4-hydroxyphenyl)ethenyl]-3-methylbutanamide} + AH2 + S-adenosyl-L-methionine = [mycofactocin precursor peptide]-C-terminal glycyl-N-{5-[(4-hydroxyphenyl)methyl]-4,4-dimethyl-2-oxopyrrolidin-3-yl}acetamide + 5'-deoxyadenosine + L-methionine + A + H(+). Radical S-adenosylmethionine (SAM) enzyme responsible for the first step of the biosynthesis of the enzyme cofactor mycofactocin (MFT). Catalyzes two reactions at the C-terminus of the mycofactocin precursor (the MftA peptide). The first one is the oxidative decarboxylation of the C-terminal L-tyrosine of MftA, forming an unsaturated tyramine moiety. The second reaction is the cross-linking of the tyramine with the penultimate L-valine residue, forming a five-membered lactam ring. Its activity requires the presence of the MftB chaperone. The sequence is that of Mycofactocin maturase MftC (mftC) from Mycobacterium tuberculosis (strain CDC 1551 / Oshkosh).